The primary structure comprises 414 residues: tRNA N6-adenosine threonylcarbamoyltransferase, mitochondrial (414 aa).

The transit peptide at Met-1 to His-29 directs the protein to the mitochondrion. N6-acetyllysine occurs at positions 74 and 140. 2 residues coordinate a divalent metal cation: His-147 and His-151. Residues Leu-169–Gly-173 and Asp-202 contribute to the substrate site. Residue Lys-203 is modified to N6-acetyllysine. Residues Gly-222 and Glu-226 each contribute to the substrate site. Lys-230, Lys-240, and Lys-299 each carry N6-acetyllysine. Residues Ser-329 to Asn-330 and Thr-357 contribute to the substrate site. Asp-358 serves as a coordination point for a divalent metal cation.

It belongs to the KAE1 / TsaD family. Monomer. A divalent metal cation is required as a cofactor. In terms of tissue distribution, widely expressed, with maximum expression in pituitary gland, prostate, rectum and uterus.

It is found in the mitochondrion. The enzyme catalyses L-threonylcarbamoyladenylate + adenosine(37) in tRNA = N(6)-L-threonylcarbamoyladenosine(37) in tRNA + AMP + H(+). Functionally, required for the formation of a threonylcarbamoyl group on adenosine at position 37 (t(6)A37) in mitochondrial tRNAs that read codons beginning with adenine. Probably involved in the transfer of the threonylcarbamoyl moiety of threonylcarbamoyl-AMP (TC-AMP) to the N6 group of A37. Involved in mitochondrial genome maintenance. The sequence is that of tRNA N6-adenosine threonylcarbamoyltransferase, mitochondrial from Homo sapiens (Human).